The primary structure comprises 413 residues: Serine hydroxymethyltransferase (413 aa).

(6S)-5,6,7,8-tetrahydrofolate is bound by residues Leu117 and 121 to 123; that span reads GHL. An N6-(pyridoxal phosphate)lysine modification is found at Lys226. (6S)-5,6,7,8-tetrahydrofolate-binding positions include Glu239 and 349 to 351; that span reads SPF.

This sequence belongs to the SHMT family. As to quaternary structure, homodimer. It depends on pyridoxal 5'-phosphate as a cofactor.

The protein resides in the cytoplasm. It carries out the reaction (6R)-5,10-methylene-5,6,7,8-tetrahydrofolate + glycine + H2O = (6S)-5,6,7,8-tetrahydrofolate + L-serine. It functions in the pathway one-carbon metabolism; tetrahydrofolate interconversion. Its pathway is amino-acid biosynthesis; glycine biosynthesis; glycine from L-serine: step 1/1. Its function is as follows. Catalyzes the reversible interconversion of serine and glycine with tetrahydrofolate (THF) serving as the one-carbon carrier. This reaction serves as the major source of one-carbon groups required for the biosynthesis of purines, thymidylate, methionine, and other important biomolecules. Also exhibits THF-independent aldolase activity toward beta-hydroxyamino acids, producing glycine and aldehydes, via a retro-aldol mechanism. This Bacillus anthracis (strain A0248) protein is Serine hydroxymethyltransferase.